Consider the following 306-residue polypeptide: Protoheme IX farnesyltransferase (306 aa).

The next 9 helical transmembrane spans lie at 32 to 52 (VVAL…PGAL), 58 to 78 (IPAM…NHIV), 103 to 123 (NAIV…YALV), 126 to 146 (LTAF…TMYL), 153 to 173 (NITI…TAMT), 180 to 200 (ALLL…ALAI), 227 to 247 (ILLY…VGMS), 249 to 269 (WLYL…AWQL), and 278 to 298 (AMAT…ILLL).

Belongs to the UbiA prenyltransferase family. Protoheme IX farnesyltransferase subfamily.

The protein localises to the cell inner membrane. The enzyme catalyses heme b + (2E,6E)-farnesyl diphosphate + H2O = Fe(II)-heme o + diphosphate. The protein operates within porphyrin-containing compound metabolism; heme O biosynthesis; heme O from protoheme: step 1/1. Functionally, converts heme B (protoheme IX) to heme O by substitution of the vinyl group on carbon 2 of heme B porphyrin ring with a hydroxyethyl farnesyl side group. The protein is Protoheme IX farnesyltransferase of Colwellia psychrerythraea (strain 34H / ATCC BAA-681) (Vibrio psychroerythus).